A 397-amino-acid polypeptide reads, in one-letter code: Glutamyl-tRNA reductase (397 aa).

Residues 47–50 (TCGR), S98, 103–105 (ETD), and Q109 each bind substrate. Catalysis depends on C48, which acts as the Nucleophile. 177-182 (GAGAVG) provides a ligand contact to NADP(+).

Belongs to the glutamyl-tRNA reductase family. Homodimer.

The enzyme catalyses (S)-4-amino-5-oxopentanoate + tRNA(Glu) + NADP(+) = L-glutamyl-tRNA(Glu) + NADPH + H(+). The protein operates within porphyrin-containing compound metabolism; protoporphyrin-IX biosynthesis; 5-aminolevulinate from L-glutamyl-tRNA(Glu): step 1/2. Catalyzes the NADPH-dependent reduction of glutamyl-tRNA(Glu) to glutamate 1-semialdehyde (GSA). The sequence is that of Glutamyl-tRNA reductase from Pyrobaculum aerophilum (strain ATCC 51768 / DSM 7523 / JCM 9630 / CIP 104966 / NBRC 100827 / IM2).